Consider the following 572-residue polypeptide: MKDNQQAVQLQQPTTIGHYLAVRLAQAGVKHHFVVPGDYNLGLLDKLQYNNYLEEVNCANELNCAFAAEGYARANGIAACVVTYSVGAFTAFDGIGGAYAEDLPVILISGSPNTNDIGSSHLLHHTLGTHDFSYQYEMAKKITCAAVSIQRPTEAPRLIDYAIKMALLKKKPVYIEVPTNVASQPCAAPGPASLITEPETSNQEYLQMAVDISAKIVNGKQKPVLLAGPKLRSFKAESAFLELANSLNCSVAVMPNAKSFFPESHPNYAGIYWGQASTLGAESIINWSDCIICAGTTFTDYSSNGWTSLPPKANVLHVDVDRVTVSDAEFGGVLLRDFLHELAKKVKANNASVVEYKRIRPESLEIPMENPKAALNRKEIIRQVQNLVNQETTLFVDTGDSWFGGMRITLPEKARFEIEMQWGHIGWSVPSAFGYAIGAPKRNVVVFVGDGSFQETVQEVSQMVRLNLPIIMFLINNRGYTIEVEIHDGPYNRIKNWDYAAIVEAFNAGEGHAKGFRVGNGHELAEAIRQAKENSQGPTLIECNIDQDDCSKELINWGHNVGAANGKPPAKE.

Residues aspartate 38 and histidine 125 each coordinate substrate. Residues aspartate 400–isoleucine 482 form a thiamine pyrophosphate binding region. Mg(2+)-binding residues include aspartate 450, asparagine 477, and glycine 479. A substrate-binding site is contributed by glutamate 483.

Belongs to the TPP enzyme family. In terms of assembly, homotetramer. A metal cation is required as a cofactor. Thiamine diphosphate serves as cofactor.

The catalysed reaction is a 2-oxocarboxylate + H(+) = an aldehyde + CO2. This chain is Probable pyruvate decarboxylase C186.09, found in Schizosaccharomyces pombe (strain 972 / ATCC 24843) (Fission yeast).